The primary structure comprises 366 residues: Ribosomal RNA large subunit methyltransferase M (366 aa).

Residues S187, 220–223, D239, D259, and D276 each bind S-adenosyl-L-methionine; that span reads SPGG. K305 (proton acceptor) is an active-site residue.

It belongs to the class I-like SAM-binding methyltransferase superfamily. RNA methyltransferase RlmE family. RlmM subfamily. As to quaternary structure, monomer.

Its subcellular location is the cytoplasm. The enzyme catalyses cytidine(2498) in 23S rRNA + S-adenosyl-L-methionine = 2'-O-methylcytidine(2498) in 23S rRNA + S-adenosyl-L-homocysteine + H(+). Catalyzes the 2'-O-methylation at nucleotide C2498 in 23S rRNA. The protein is Ribosomal RNA large subunit methyltransferase M of Tolumonas auensis (strain DSM 9187 / NBRC 110442 / TA 4).